Reading from the N-terminus, the 202-residue chain is Superoxide dismutase [Mn] (202 aa).

H27 contributes to the Mn(2+) binding site. Phosphothreonine is present on residues T34 and T70. Mn(2+) contacts are provided by H82, D164, and H168.

It belongs to the iron/manganese superoxide dismutase family. As to quaternary structure, homodimer. Mn(2+) serves as cofactor.

It catalyses the reaction 2 superoxide + 2 H(+) = H2O2 + O2. Functionally, destroys superoxide anion radicals which are normally produced within the cells and which are toxic to biological systems. The protein is Superoxide dismutase [Mn] (sodA) of Halalkalibacterium halodurans (strain ATCC BAA-125 / DSM 18197 / FERM 7344 / JCM 9153 / C-125) (Bacillus halodurans).